The sequence spans 152 residues: Mediator of RNA polymerase II transcription subunit 31 (152 aa).

Residues 126–144 (DLHVESEEDREKNNEEQAE) show a composition bias toward basic and acidic residues. The segment at 126–152 (DLHVESEEDREKNNEEQAEKGSNGATS) is disordered.

The protein belongs to the Mediator complex subunit 31 family. In terms of assembly, component of the Mediator complex.

It is found in the nucleus. In terms of biological role, component of the Mediator complex, a coactivator involved in the regulated transcription of nearly all RNA polymerase II-dependent genes. Mediator functions as a bridge to convey information from gene-specific regulatory proteins to the basal RNA polymerase II transcription machinery. Mediator is recruited to promoters by direct interactions with regulatory proteins and serves as a scaffold for the assembly of a functional preinitiation complex with RNA polymerase II and the general transcription factors. The protein is Mediator of RNA polymerase II transcription subunit 31 (SOH1) of Coccidioides immitis (strain RS) (Valley fever fungus).